Here is a 65-residue protein sequence, read N- to C-terminus: Large ribosomal subunit protein bL35 (65 aa).

A disordered region spans residues 1-26 (MPKMKTNRASAKRFKKTASGGFKAGQ).

Belongs to the bacterial ribosomal protein bL35 family.

In Oenococcus oeni (strain ATCC BAA-331 / PSU-1), this protein is Large ribosomal subunit protein bL35.